Here is a 702-residue protein sequence, read N- to C-terminus: Glucosidase 2 subunit beta (702 aa).

The N-terminal stretch at 1-20 (MVSMFSLFLLLIEQSPLVAS) is a signal peptide. N-linked (GlcNAc...) asparagine glycosylation occurs at asparagine 145. Positions 163 to 228 (SYREGKEALE…LRGEYFNQLS (66 aa)) form a coiled coil. 2 N-linked (GlcNAc...) asparagine glycosylation sites follow: asparagine 240 and asparagine 358. The interval 435–457 (PKVLPPDAVESEQDTNSDHIGTS) is disordered. Residues 478 to 517 (KDLVSLEKRFRSCESQVSLLENELKQKMDYKKLLDETEDE) adopt a coiled-coil conformation. 2 N-linked (GlcNAc...) asparagine glycosylation sites follow: asparagine 520 and asparagine 525. Residues 537–689 (SYCLDDILDN…DVVGPLGCNK (153 aa)) enclose the MRH domain. Intrachain disulfides connect cysteine 539/cysteine 552, cysteine 646/cysteine 675, and cysteine 660/cysteine 687. Asparagine 688 and asparagine 699 each carry an N-linked (GlcNAc...) asparagine glycan.

Heterodimer of a catalytic subunit alpha (ROT2) and a subunit beta (GTB1).

It localises to the endoplasmic reticulum. In terms of biological role, subunit of glucosidase 2, which cleaves sequentially the 2 innermost alpha-1,3-linked glucose residues from the Glc(2)Man(9)GlcNAc(2) oligosaccharide precursor of immature glycoproteins. Specifically required for the cleavage of the final glucose. In Saccharomyces cerevisiae (strain ATCC 204508 / S288c) (Baker's yeast), this protein is Glucosidase 2 subunit beta (GTB1).